A 682-amino-acid polypeptide reads, in one-letter code: Beta-galactosidase (682 aa).

The N-terminal stretch at Met1–Gly23 is a signal peptide. The propeptide occupies Leu24–Thr28. N-linked (GlcNAc...) asparagine glycosylation occurs at Asn26. 3 residues coordinate substrate: Tyr83, Glu129, and Asn187. The Proton donor role is filled by Glu188. Cys195 and Cys230 are disulfide-bonded. N-linked (GlcNAc...) asparagine glycosylation is present at Asn247. Glu268 acts as the Nucleophile in catalysis. Tyr333 provides a ligand contact to substrate. Residues Asn464, Asn498, Asn545, and Asn555 are each glycosylated (N-linked (GlcNAc...) asparagine). The cysteines at positions 626 and 634 are disulfide-linked.

Belongs to the glycosyl hydrolase 35 family. As to quaternary structure, homodimer. May form higher multimers.

Its subcellular location is the lysosome. It carries out the reaction Hydrolysis of terminal non-reducing beta-D-galactose residues in beta-D-galactosides.. In terms of biological role, cleaves beta-linked terminal galactosyl residues from gangliosides, glycoproteins, and glycosaminoglycans. This Macaca fascicularis (Crab-eating macaque) protein is Beta-galactosidase (GLB1).